Here is a 166-residue protein sequence, read N- to C-terminus: NAD(P)H-quinone oxidoreductase subunit I, chloroplastic (166 aa).

2 4Fe-4S ferredoxin-type domains span residues Gly55 to Lys84 and Leu95 to Glu124. [4Fe-4S] cluster contacts are provided by Cys64, Cys67, Cys70, Cys74, Cys104, Cys107, Cys110, and Cys114.

It belongs to the complex I 23 kDa subunit family. NDH is composed of at least 16 different subunits, 5 of which are encoded in the nucleus. [4Fe-4S] cluster is required as a cofactor.

It is found in the plastid. It localises to the chloroplast thylakoid membrane. It carries out the reaction a plastoquinone + NADH + (n+1) H(+)(in) = a plastoquinol + NAD(+) + n H(+)(out). The catalysed reaction is a plastoquinone + NADPH + (n+1) H(+)(in) = a plastoquinol + NADP(+) + n H(+)(out). Its function is as follows. NDH shuttles electrons from NAD(P)H:plastoquinone, via FMN and iron-sulfur (Fe-S) centers, to quinones in the photosynthetic chain and possibly in a chloroplast respiratory chain. The immediate electron acceptor for the enzyme in this species is believed to be plastoquinone. Couples the redox reaction to proton translocation, and thus conserves the redox energy in a proton gradient. The sequence is that of NAD(P)H-quinone oxidoreductase subunit I, chloroplastic from Hofmeisteria fasciculata (Helogyne fasciculata).